The sequence spans 605 residues: Capsid scaffolding protein (605 aa).

Active-site charge relay system residues include H52, S120, and H139. The tract at residues 326–344 (GEFVLIPTAYYSQLLTGQT) is interaction with pAP. The tract at residues 585 to 605 (IQGSTADDADMFANQMMVGRC) is interaction with major capsid protein.

Belongs to the herpesviridae capsid scaffolding protein family. As to quaternary structure, homomultimer. Interacts with major capsid protein. In terms of assembly, exists in a monomer-dimer equilibrium with the dimer being the active species. Post-translationally, capsid scaffolding protein is cleaved by assemblin after formation of the spherical procapsid. As a result, the capsid obtains its mature, icosahedral shape. Cleavages occur at two or more sites: release (R-site) and maturation (M-site).

Its subcellular location is the host cytoplasm. The protein resides in the host nucleus. It carries out the reaction Cleaves -Ala-|-Ser- and -Ala-|-Ala- bonds in the scaffold protein.. Its function is as follows. Acts as a scaffold protein by binding major capsid protein in the cytoplasm, inducing the nuclear localization of both proteins. Multimerizes in the nucleus such as major capsid protein forms the icosahedral T=16 capsid. Autocatalytic cleavage releases the assembly protein, and subsequently abolishes interaction with major capsid protein. Cleavages products are evicted from the capsid before or during DNA packaging. In terms of biological role, protease that plays an essential role in virion assembly within the nucleus. Catalyzes the cleavage of the assembly protein after formation of the spherical procapsid. By that cleavage, the capsid matures and gains its icosahedral shape. The cleavage sites seem to include -Ala-Ser-, -Ala-Ala-, as well as Ala-Thr bonds. Assemblin and cleavages products are evicted from the capsid before or during DNA packaging. Plays a major role in capsid assembly. Acts as a scaffold protein by binding major capsid protein. Multimerizes in the nucleus such as major capsid protein forms the icosahedral T=16 capsid. Cleaved by assemblin after capsid completion. The cleavages products are evicted from the capsid before or during DNA packaging. This chain is Capsid scaffolding protein (33), found in Varicella-zoster virus (strain Dumas) (HHV-3).